A 369-amino-acid polypeptide reads, in one-letter code: Peptide chain release factor 2 (369 aa).

Position 251 is an N5-methylglutamine (Q251).

The protein belongs to the prokaryotic/mitochondrial release factor family. Post-translationally, methylated by PrmC. Methylation increases the termination efficiency of RF2.

It localises to the cytoplasm. Functionally, peptide chain release factor 2 directs the termination of translation in response to the peptide chain termination codons UGA and UAA. This chain is Peptide chain release factor 2 (prfB), found in Chlamydia pneumoniae (Chlamydophila pneumoniae).